Here is a 556-residue protein sequence, read N- to C-terminus: Glutamine--tRNA ligase (556 aa).

The 'HIGH' region motif lies at 34-44 (PEPNGFLHIGH). ATP is bound by residues 35 to 37 (EPN) and 41 to 47 (HIGHAKA). Residues aspartate 67 and tyrosine 212 each contribute to the L-glutamine site. Residues threonine 231, 261-262 (RL), and 269-271 (MSK) contribute to the ATP site. The 'KMSKS' region motif lies at 268–272 (LMSKR).

It belongs to the class-I aminoacyl-tRNA synthetase family. Monomer.

The protein resides in the cytoplasm. The enzyme catalyses tRNA(Gln) + L-glutamine + ATP = L-glutaminyl-tRNA(Gln) + AMP + diphosphate. This is Glutamine--tRNA ligase from Colwellia psychrerythraea (strain 34H / ATCC BAA-681) (Vibrio psychroerythus).